The sequence spans 323 residues: Global nitrogen regulator NrpRI (323 aa).

The tract at residues 11-76 is winged helix-turn-helix; sequence IEIMRVIHES…TLTDLGENEM (66 aa). The tract at residues 86 to 323 is NRD; that stretch reads GFVISRIEEM…MLDYQTMKEI (238 aa).

It belongs to the NrpR family. As to quaternary structure, forms a complex with NrpRII and the general archaeal transcription factors TBP and TFB. Interacts directly with NrpRII.

Under nitrogen limitation, binding of 2-oxoglutarate to the NrpRI/NrpRII complex decreases the binding affinity of NrpRI to DNA as well as the binding affinity of NrpRII to TBP and TFB, which leads to removal of the complex from the operator, RNA polymerase recruitment and initiation of transcription. Its function is as follows. Plays a major role in nitrogen regulation. Under nitrogen sufficiency, binds to the nifH and the glnk1 promoters, leading to repression of the transcription of the genes. The chain is Global nitrogen regulator NrpRI from Methanosarcina mazei (strain ATCC BAA-159 / DSM 3647 / Goe1 / Go1 / JCM 11833 / OCM 88) (Methanosarcina frisia).